The following is a 550-amino-acid chain: Arginine--tRNA ligase (550 aa).

Residues 130-140 carry the 'HIGH' region motif; that stretch reads ANPTGPIHIGG.

This sequence belongs to the class-I aminoacyl-tRNA synthetase family. As to quaternary structure, monomer.

The protein localises to the cytoplasm. The enzyme catalyses tRNA(Arg) + L-arginine + ATP = L-arginyl-tRNA(Arg) + AMP + diphosphate. In Mycobacterium sp. (strain KMS), this protein is Arginine--tRNA ligase.